Here is a 158-residue protein sequence, read N- to C-terminus: NAD(P)H-quinone oxidoreductase subunit J, chloroplastic (158 aa).

The protein belongs to the complex I 30 kDa subunit family. NDH is composed of at least 16 different subunits, 5 of which are encoded in the nucleus.

It localises to the plastid. Its subcellular location is the chloroplast thylakoid membrane. It catalyses the reaction a plastoquinone + NADH + (n+1) H(+)(in) = a plastoquinol + NAD(+) + n H(+)(out). The catalysed reaction is a plastoquinone + NADPH + (n+1) H(+)(in) = a plastoquinol + NADP(+) + n H(+)(out). Its function is as follows. NDH shuttles electrons from NAD(P)H:plastoquinone, via FMN and iron-sulfur (Fe-S) centers, to quinones in the photosynthetic chain and possibly in a chloroplast respiratory chain. The immediate electron acceptor for the enzyme in this species is believed to be plastoquinone. Couples the redox reaction to proton translocation, and thus conserves the redox energy in a proton gradient. The sequence is that of NAD(P)H-quinone oxidoreductase subunit J, chloroplastic from Helianthus annuus (Common sunflower).